Here is a 290-residue protein sequence, read N- to C-terminus: MDIDAYFERIGYKNSRDKLDLETLTDILQHQIRAIPFENLNIHCGEAMELDLEVIFDQIVRRKRGGWCLQVNHLLYWALTMIGFETTILGGYVYNTFNDKYSSAMIHLLLKVTIDGRDYIADAGFGRSYQMWQPLELISGKYQPQTPCIFRLTEDRGTWYLDQIRREQYIPNQDFLDSDLLEKNEYRKIYSFTLEPRTIKDFESVNTYLQESPASVFTSKSFCSLQTPEGVHCLVGFTLTYRRFNYKDNTDLVEFKTLNEKEIEENLKNIFNISLEKKLTPKHGDKFFTI.

The residue at position 1 (Met-1) is an N-acetylmethionine. CoA is bound at residue Ser-103. Residue Ile-106–His-107 participates in substrate binding. Residue Tyr-208 coordinates CoA.

This sequence belongs to the arylamine N-acetyltransferase family.

It is found in the cytoplasm. It catalyses the reaction an arylamine + acetyl-CoA = an N-acetylarylamine + CoA. Participates in the detoxification of a plethora of hydrazine and arylamine drugs. The chain is Arylamine N-acetyltransferase 1 (NAT1) from Bos taurus (Bovine).